The sequence spans 238 residues: Histidine/lysine/arginine/ornithine transport system permease protein HisM (238 aa).

Over 1–26 (MIEILHEYWKPLLWTDGYRFTGVAIT) the chain is Periplasmic. Residues 23–221 (VAITLWLLIL…IISYVLISLF (199 aa)) enclose the ABC transmembrane type-1 domain. A helical transmembrane segment spans residues 27–47 (LWLLILSVVIGGVLALFLAIG). At 48 to 58 (RVSSNKYIQFP) the chain is on the cytoplasmic side. A helical membrane pass occupies residues 59 to 79 (IWLFTYIFRGTPLYVQLLVFY). Residues 80-104 (SGMYTLEIVKGTEFLNAFFRSGLNC) are Periplasmic-facing. A helical membrane pass occupies residues 105–125 (TVLALTLNTCAYTTEIFAGAI). At 126–157 (RSVPHGEIEAARAYGFSTFKMYRCIILPSALR) the chain is on the cytoplasmic side. Residues 158–178 (IALPAYSNEVILMLHSTALAF) form a helical membrane-spanning segment. The Periplasmic segment spans residues 179–199 (TATVPDLLKIARDINAATYQP). A helical transmembrane segment spans residues 200–220 (FTAFGIAAVLYLIISYVLISL). Topologically, residues 221 to 238 (FRRAEKRWLQHVKPSSTH) are cytoplasmic.

This sequence belongs to the binding-protein-dependent transport system permease family. HisMQ subfamily. The HisPMQJ complex is composed of two ATP-binding proteins (HisP), two transmembrane proteins (HisM and HisQ) and a solute-binding protein (HisJ). The HisPMQ-ArgT complex is composed of two ATP-binding proteins (HisP), two transmembrane proteins (HisM and HisQ) and a solute-binding protein (ArgT).

It localises to the cell inner membrane. Functionally, part of the ABC transporter complex HisPMQJ involved in histidine transport. Is also part of the ABC transporter complex HisPMQ-ArgT involved in lysine/arginine/ornithine transport. Probably responsible for the translocation of the substrate across the membrane. This chain is Histidine/lysine/arginine/ornithine transport system permease protein HisM (hisM), found in Escherichia coli O157:H7.